A 317-amino-acid chain; its full sequence is Putative pyridoxal kinase BUD17 (317 aa).

Substrate contacts are provided by serine 16 and tyrosine 128. ATP contacts are provided by residues 190 to 191 (TS) and 220 to 232 (EIPKINAKFSGSG). Aspartate 233 is a substrate binding site.

The protein belongs to the pyridoxine kinase family. Requires a divalent metal cation as cofactor.

It localises to the cytoplasm. The protein resides in the nucleus. It catalyses the reaction pyridoxal + ATP = pyridoxal 5'-phosphate + ADP + H(+). Required for synthesis of pyridoxal-5-phosphate from vitamin B6. Important for bud site selection. This Saccharomyces cerevisiae (strain ATCC 204508 / S288c) (Baker's yeast) protein is Putative pyridoxal kinase BUD17 (BUD17).